The chain runs to 544 residues: Zinc finger and BTB domain-containing protein 7B (544 aa).

Positions 34–115 (CDLTIRTQGL…AYTATLTTSS (82 aa)) constitute a BTB domain. Serine 150 carries the post-translational modification Phosphoserine. 2 disordered regions span residues 171-221 (TTAS…ARAN) and 244-314 (GRLG…EDPI). The segment covering 186 to 200 (PQVPLLPPPPPPPRP) has biased composition (pro residues). Residues 201-210 (VARRSRKPRK) are compositionally biased toward basic residues. An N6-acetyllysine; by EP300; alternate mark is found at lysine 210 and lysine 216. Glycyl lysine isopeptide (Lys-Gly) (interchain with G-Cter in ubiquitin); alternate cross-links involve residues lysine 210 and lysine 216. A compositionally biased stretch (acidic residues) spans 277-286 (FEGEEEEEEM). Lysine 339 is subject to N6-acetyllysine; by EP300; alternate. A Glycyl lysine isopeptide (Lys-Gly) (interchain with G-Cter in ubiquitin); alternate cross-link involves residue lysine 339. The required for interaction with and acetylation by EP300 stretch occupies residues 348–404 (MPQECPVCHKIIHGAGKLPRHMRTHTGEKPFACEVCGVRFTRNDKLKIHMRKHTGER). The C2H2-type 1 zinc-finger motif lies at 350–372 (QECPVCHKIIHGAGKLPRHMRTH). The residue at position 373 (threonine 373) is a Phosphothreonine. 2 consecutive C2H2-type zinc fingers follow at residues 378–400 (FACE…MRKH) and 406–428 (YSCP…MHLH). The C2H2-type 4; atypical zinc-finger motif lies at 434 to 458 (YECHLCHKAFAKEDHLQRHLKGQNC). Disordered stretches follow at residues 465–493 (RRRK…DLSN) and 507–544 (WEQS…MESS). Composition is skewed to low complexity over residues 511 to 522 (ATTGPPVTTQGP) and 531 to 544 (TPTT…MESS).

In terms of assembly, homodimerizes. Interacts with NCL, NEDD4 and YBX1. Interacts with HNRNPU (via RNA-binding RGG-box region); the interaction facilitates the recruitment of long non-coding RNA Blnc1 by ZBTB7B. Interacts with HDAC4 and HDAC5; the interaction allows the recruitment of HDAC4 and HDAC5 on CD8 loci for deacetylation and possible inhibition of CD8 genes expression. Post-translationally, acetylated directly and specifically by EP300. EP300-mediated acetylation of Lys-210, Lys-216 and Lys-339 stabilizes the protein by antagonizing ubiquitin conjugation. Ubiquitinated, leading to proteasomal degradation. Competes with acetylation on Lys-210, Lys-216 and Lys-339. Widely expressed, with a higher level in skin. Expressed in thymus. Restricted to CD4 cells (mature single positive CD4(+) and intermediate CD4(+)CD8(+) cells). Expressed in the luminal epithelial cells in the mammary glands where is up-regulated at late pregnancy and lactation. Expression is enriched in brown fat.

Its subcellular location is the nucleus. Transcription regulator that acts as a key regulator of lineage commitment of immature T-cell precursors. Exerts distinct biological functions in the mammary epithelial cells and T cells in a tissue-specific manner. Necessary and sufficient for commitment of CD4 lineage, while its absence causes CD8 commitment. Development of immature T-cell precursors (thymocytes) to either the CD4 helper or CD8 killer T-cell lineages correlates precisely with their T-cell receptor specificity for major histocompatibility complex class II or class I molecules, respectively. Cross-antagonism between ZBTB7B and CBF complexes are determinative to CD4 versus CD8 cell fate decision. Suppresses RUNX3 expression and imposes CD4+ lineage fate by inducing the SOCS suppressors of cytokine signaling. induces, as a transcriptional activator, SOCS genes expression which represses RUNX3 expression and promotes the CD4+ lineage fate. During CD4 lineage commitment, associates with multiple sites at the CD8 locus, acting as a negative regulator of the CD8 promoter and enhancers by epigenetic silencing through the recruitment of class II histone deacetylases, such as HDAC4 and HDAC5, to these loci. Regulates the development of IL17-producing CD1d-restricted naural killer (NK) T cells. Also functions as an important metabolic regulator in the lactating mammary glands. Critical feed-forward regulator of insulin signaling in mammary gland lactation, directly regulates expression of insulin receptor substrate-1 (IRS-1) and insulin-induced Akt-mTOR-SREBP signaling. Transcriptional repressor of the collagen COL1A1 and COL1A2 genes. May also function as a repressor of fibronectin and possibly other extracellular matrix genes. Potent driver of brown fat development, thermogenesis and cold-induced beige fat formation. Recruits the brown fat lncRNA 1 (Blnc1):HNRNPU ribonucleoprotein complex to activate thermogenic gene expression in brown and beige adipocytes. The chain is Zinc finger and BTB domain-containing protein 7B from Mus musculus (Mouse).